The chain runs to 355 residues: Methionine import ATP-binding protein MetN (355 aa).

Positions 8 to 250 constitute an ABC transporter domain; sequence LKNIDITFTQ…PQEDLTQEFI (243 aa). ATP is bound at residue 42 to 49; the sequence is GYSGAGKS.

Belongs to the ABC transporter superfamily. Methionine importer (TC 3.A.1.24) family. In terms of assembly, the complex is composed of two ATP-binding proteins (MetN), two transmembrane proteins (MetI) and a solute-binding protein (MetQ).

The protein localises to the cell membrane. The enzyme catalyses L-methionine(out) + ATP + H2O = L-methionine(in) + ADP + phosphate + H(+). The catalysed reaction is D-methionine(out) + ATP + H2O = D-methionine(in) + ADP + phosphate + H(+). In terms of biological role, part of the ABC transporter complex MetNIQ involved in methionine import. Responsible for energy coupling to the transport system. This Streptococcus thermophilus (strain ATCC BAA-250 / LMG 18311) protein is Methionine import ATP-binding protein MetN.